Reading from the N-terminus, the 209-residue chain is MSQEATEAPAMPGEGHGHNKAKARWLLGTDRKRSRINRTRQDLWEDTSWSNHRLSRATSAPRGTRARGTAHGRSEASPENAARERTRVKTLRQAFLALQAALPAVPPDTKLSKLDVLVLATSYIAHLTRTLGHELPGPAWPPFVRGLRYLHPLKKWPMRSRLYAGGLGCSDLDSTTAITTGQRCKDAELGSQDSVAAESLLTSPAFGNK.

Disordered regions lie at residues Met1–Lys20 and Leu54–Arg85. The segment covering Gly72–Arg85 has biased composition (basic and acidic residues). Positions Glu75–Leu127 constitute a bHLH domain.

Forms inactive heterodimeric complex with TCF3. In terms of tissue distribution, highly expressed in the uterus (predominantly in myometrium), ovary, and testis. Expression in the uterus is higher in the diestrus phase than in the estrus phase and reaches a maximum at 7.5 dpc. Expression declines towards the time of delivery and returns to the non-pregnant level 4 days after delivery. Low expression seen in lung, heart, intestine, and spleen.

Its subcellular location is the nucleus. Functionally, inhibits E-box-mediated binding and transactivation of bHLH factors. Inhibitory effect is similar to that of ID proteins. Inhibits the formation of TCF3 and MYOD1 homodimers and heterodimers. Lacks DNA binding activity. May be involved in the regulation or modulation of smooth muscle contraction of the uterus during pregnancy and particularly around the time of delivery. Seems to play a role in the inhibition of myogenesis. This is Transcription factor 23 (Tcf23) from Mus musculus (Mouse).